The primary structure comprises 332 residues: 4-hydroxythreonine-4-phosphate dehydrogenase (332 aa).

Residues His-138 and Thr-139 each contribute to the substrate site. Residues His-168, His-213, and His-269 each coordinate a divalent metal cation. 3 residues coordinate substrate: Lys-277, Asn-286, and Arg-295.

It belongs to the PdxA family. In terms of assembly, homodimer. It depends on Zn(2+) as a cofactor. Requires Mg(2+) as cofactor. Co(2+) is required as a cofactor.

The protein resides in the cytoplasm. The catalysed reaction is 4-(phosphooxy)-L-threonine + NAD(+) = 3-amino-2-oxopropyl phosphate + CO2 + NADH. The protein operates within cofactor biosynthesis; pyridoxine 5'-phosphate biosynthesis; pyridoxine 5'-phosphate from D-erythrose 4-phosphate: step 4/5. Functionally, catalyzes the NAD(P)-dependent oxidation of 4-(phosphooxy)-L-threonine (HTP) into 2-amino-3-oxo-4-(phosphooxy)butyric acid which spontaneously decarboxylates to form 3-amino-2-oxopropyl phosphate (AHAP). In Vibrio parahaemolyticus serotype O3:K6 (strain RIMD 2210633), this protein is 4-hydroxythreonine-4-phosphate dehydrogenase.